We begin with the raw amino-acid sequence, 503 residues long: Na(+)-translocating NADH-quinone reductase subunit B (503 aa).

Transmembrane regions (helical) follow at residues 55–75, 85–105, 120–142, 161–181, and 186–206; these read MMLV…NSGL, PQIM…SFVS, IFLP…FAII, ILPP…GVVI, and FGGT…FLFF. Thr-248 is modified (FMN phosphoryl threonine). 5 helical membrane-spanning segments follow: residues 361–381, 387–407, 417–437, 452–472, and 475–495; these read TSTV…IASW, FGLS…LAAG, FFIP…LVFM, WFYG…NPAY, and GVML…RIAL.

This sequence belongs to the NqrB/RnfD family. In terms of assembly, composed of six subunits; NqrA, NqrB, NqrC, NqrD, NqrE and NqrF. It depends on FMN as a cofactor.

It localises to the cell inner membrane. The catalysed reaction is a ubiquinone + n Na(+)(in) + NADH + H(+) = a ubiquinol + n Na(+)(out) + NAD(+). Its function is as follows. NQR complex catalyzes the reduction of ubiquinone-1 to ubiquinol by two successive reactions, coupled with the transport of Na(+) ions from the cytoplasm to the periplasm. NqrA to NqrE are probably involved in the second step, the conversion of ubisemiquinone to ubiquinol. The chain is Na(+)-translocating NADH-quinone reductase subunit B from Chlamydia muridarum (strain MoPn / Nigg).